The chain runs to 325 residues: Elongation factor P--(R)-beta-lysine ligase (325 aa).

Residue 76–78 (SPE) coordinates substrate. ATP-binding positions include 100 to 102 (RNE) and Asn109. Tyr118 lines the substrate pocket. Residue 244 to 245 (EL) participates in ATP binding. Glu251 lines the substrate pocket. An ATP-binding site is contributed by Gly300.

It belongs to the class-II aminoacyl-tRNA synthetase family. EpmA subfamily. In terms of assembly, homodimer.

The enzyme catalyses D-beta-lysine + L-lysyl-[protein] + ATP = N(6)-((3R)-3,6-diaminohexanoyl)-L-lysyl-[protein] + AMP + diphosphate + H(+). With EpmB is involved in the beta-lysylation step of the post-translational modification of translation elongation factor P (EF-P) on 'Lys-34'. Catalyzes the ATP-dependent activation of (R)-beta-lysine produced by EpmB, forming a lysyl-adenylate, from which the beta-lysyl moiety is then transferred to the epsilon-amino group of EF-P 'Lys-34'. This chain is Elongation factor P--(R)-beta-lysine ligase, found in Salmonella dublin (strain CT_02021853).